The following is a 102-amino-acid chain: UPF0147 protein MTH_1407 (102 aa).

Belongs to the UPF0147 family.

In Methanothermobacter thermautotrophicus (strain ATCC 29096 / DSM 1053 / JCM 10044 / NBRC 100330 / Delta H) (Methanobacterium thermoautotrophicum), this protein is UPF0147 protein MTH_1407.